We begin with the raw amino-acid sequence, 225 residues long: Membrin-11 (225 aa).

Position 2 is an N-acetylalanine (Ala2). The Cytoplasmic segment spans residues 2–200; the sequence is ASGIVEGGGS…VLRLIERRNR (199 aa). A helical; Anchor for type IV membrane protein membrane pass occupies residues 201–221; that stretch reads VDTWIKYAGMIATLVILYLFI. Residues 222–225 lie on the Vesicular side of the membrane; it reads RWTR.

The protein belongs to the GOSR2 family.

It is found in the golgi apparatus membrane. Involved in transport of proteins from the cis/medial-Golgi to the trans-Golgi network. The sequence is that of Membrin-11 (MEMB11) from Arabidopsis thaliana (Mouse-ear cress).